A 479-amino-acid polypeptide reads, in one-letter code: NADH-quinone oxidoreductase subunit N 2 (479 aa).

Transmembrane regions (helical) follow at residues 4-24, 43-63, 67-87, 99-119, 121-141, 159-179, 201-221, 239-259, 267-287, 294-314, 318-338, 364-384, 401-421, and 444-464; these read FVSF…FVVT, GVLV…SGAY, AFSQ…GILS, PEYF…VSSI, VITL…MVAM, IMFG…LYGL, AVTG…VFPF, LIAS…VSLA, ATLL…IALV, LLGF…VAMD, FASA…CFVV, LAVT…FVGF, ALVV…LQIV, and ALCV…AFTI.

This sequence belongs to the complex I subunit 2 family. NDH-1 is composed of 14 different subunits. Subunits NuoA, H, J, K, L, M, N constitute the membrane sector of the complex.

The protein resides in the cell inner membrane. The catalysed reaction is a quinone + NADH + 5 H(+)(in) = a quinol + NAD(+) + 4 H(+)(out). Functionally, NDH-1 shuttles electrons from NADH, via FMN and iron-sulfur (Fe-S) centers, to quinones in the respiratory chain. The immediate electron acceptor for the enzyme in this species is believed to be ubiquinone. Couples the redox reaction to proton translocation (for every two electrons transferred, four hydrogen ions are translocated across the cytoplasmic membrane), and thus conserves the redox energy in a proton gradient. The sequence is that of NADH-quinone oxidoreductase subunit N 2 from Opitutus terrae (strain DSM 11246 / JCM 15787 / PB90-1).